The primary structure comprises 710 residues: uncharacterized protein (710 aa).

The disordered stretch occupies residues 1–20 (MKQRQARLIGTPSQTRRQQE). Residues 13–42 (SQTRRQQELAEKLEKVKEVLEDEKKRQFNE) are a coiled coil.

Belongs to the IIV-6 268L family.

This is an uncharacterized protein from Invertebrate iridescent virus 6 (IIV-6).